The primary structure comprises 388 residues: Succinate--CoA ligase [ADP-forming] subunit beta (388 aa).

The region spanning 9–244 (KQLFQKYGVP…LDEEDPFEIE (236 aa)) is the ATP-grasp domain. ATP is bound by residues lysine 46, 53–55 (GRG), glutamate 99, leucine 102, and glutamate 107. Residues asparagine 199 and aspartate 213 each contribute to the Mg(2+) site. Residues asparagine 265 and 322–324 (GIL) contribute to the substrate site.

The protein belongs to the succinate/malate CoA ligase beta subunit family. In terms of assembly, heterotetramer of two alpha and two beta subunits. The cofactor is Mg(2+).

The enzyme catalyses succinate + ATP + CoA = succinyl-CoA + ADP + phosphate. It catalyses the reaction GTP + succinate + CoA = succinyl-CoA + GDP + phosphate. It functions in the pathway carbohydrate metabolism; tricarboxylic acid cycle; succinate from succinyl-CoA (ligase route): step 1/1. Functionally, succinyl-CoA synthetase functions in the citric acid cycle (TCA), coupling the hydrolysis of succinyl-CoA to the synthesis of either ATP or GTP and thus represents the only step of substrate-level phosphorylation in the TCA. The beta subunit provides nucleotide specificity of the enzyme and binds the substrate succinate, while the binding sites for coenzyme A and phosphate are found in the alpha subunit. The protein is Succinate--CoA ligase [ADP-forming] subunit beta of Syntrophobacter fumaroxidans (strain DSM 10017 / MPOB).